Consider the following 284-residue polypeptide: Bifunctional protein FolD 2 (284 aa).

Residues 166 to 168 and Ile-232 each bind NADP(+); that span reads GAS.

The protein belongs to the tetrahydrofolate dehydrogenase/cyclohydrolase family. In terms of assembly, homodimer.

It catalyses the reaction (6R)-5,10-methylene-5,6,7,8-tetrahydrofolate + NADP(+) = (6R)-5,10-methenyltetrahydrofolate + NADPH. It carries out the reaction (6R)-5,10-methenyltetrahydrofolate + H2O = (6R)-10-formyltetrahydrofolate + H(+). It participates in one-carbon metabolism; tetrahydrofolate interconversion. In terms of biological role, catalyzes the oxidation of 5,10-methylenetetrahydrofolate to 5,10-methenyltetrahydrofolate and then the hydrolysis of 5,10-methenyltetrahydrofolate to 10-formyltetrahydrofolate. This Colwellia psychrerythraea (strain 34H / ATCC BAA-681) (Vibrio psychroerythus) protein is Bifunctional protein FolD 2.